Here is a 559-residue protein sequence, read N- to C-terminus: (R)-mandelonitrile lyase 1 (559 aa).

The N-terminal stretch at 1-27 (MEKSTMSVILFVLHLLVLHLQYSEVHS) is a signal peptide. N-linked (GlcNAc...) asparagine glycans are attached at residues Asn30 and Asn44. FAD is bound by residues 63-64 (TS), 82-83 (ER), Thr133, and 137-140 (NAGV). N-linked (GlcNAc...) asparagine glycans are attached at residues Asn145, Asn162, Asn178, and Asn218. Val244 serves as a coordination point for FAD. 7 N-linked (GlcNAc...) asparagine glycosylation sites follow: Asn252, Asn255, Asn309, Asn380, Asn402, Asn420, and Asn467. Cys427 and Cys478 form a disulfide bridge. Tyr485 is a substrate binding site. An FAD-binding site is contributed by 486–487 (WH). The active-site Proton donor is His487. His525 functions as the Proton acceptor in the catalytic mechanism. 526–527 (PQ) provides a ligand contact to FAD.

This sequence belongs to the GMC oxidoreductase family. Monomer. The cofactor is FAD.

The enzyme catalyses (R)-mandelonitrile = benzaldehyde + hydrogen cyanide. Functionally, involved in cyanogenesis, the release of HCN from injured tissues. Catalyzes the stereospecific addition of HCN to a variety of aldehydes in vitro. It is a major seed constituent, and could have the additional role of a storage form for reduced nitrogen. The sequence is that of (R)-mandelonitrile lyase 1 (MDL1) from Prunus dulcis (Almond).